We begin with the raw amino-acid sequence, 164 residues long: SsrA-binding protein (164 aa).

The tract at residues 141–164 is disordered; the sequence is KLHDKRQDEKQKSIKREINSALKR. A compositionally biased stretch (basic and acidic residues) spans 145–158; sequence KRQDEKQKSIKREI.

This sequence belongs to the SmpB family.

It is found in the cytoplasm. In terms of biological role, required for rescue of stalled ribosomes mediated by trans-translation. Binds to transfer-messenger RNA (tmRNA), required for stable association of tmRNA with ribosomes. tmRNA and SmpB together mimic tRNA shape, replacing the anticodon stem-loop with SmpB. tmRNA is encoded by the ssrA gene; the 2 termini fold to resemble tRNA(Ala) and it encodes a 'tag peptide', a short internal open reading frame. During trans-translation Ala-aminoacylated tmRNA acts like a tRNA, entering the A-site of stalled ribosomes, displacing the stalled mRNA. The ribosome then switches to translate the ORF on the tmRNA; the nascent peptide is terminated with the 'tag peptide' encoded by the tmRNA and targeted for degradation. The ribosome is freed to recommence translation, which seems to be the essential function of trans-translation. The sequence is that of SsrA-binding protein from Prochlorococcus marinus (strain MIT 9215).